Here is a 238-residue protein sequence, read N- to C-terminus: Phosphatidylcholine synthase (238 aa).

Over 1–16 (MPVNLSMTPINKAKAW) the chain is Cytoplasmic. A helical membrane pass occupies residues 17-37 (GVHAVTASGVILALLALLALV). Residues 38–41 (DNKP) lie on the Periplasmic side of the membrane. Residues 42–62 (QACLLWLGLALLVDGLDGTLA) traverse the membrane as a helical segment. Residues 63–75 (RKYEVKEMLPHFD) lie on the Cytoplasmic side of the membrane. Residues 76–96 (GSVLDLVIDYLTYVFIPAIFI) form a helical membrane-spanning segment. Over 97-104 (YRYIPLPE) the chain is Periplasmic. A helical transmembrane segment spans residues 105–125 (HFELLAVGVILVSSLFCFCNV). Residues 126–132 (NMKSTDN) are Cytoplasmic-facing. Residues 133-153 (YFVGFPAAWNVVAVYFYVLDL) form a helical membrane-spanning segment. Topologically, residues 154-155 (HP) are periplasmic. A helical transmembrane segment spans residues 156-176 (WVNLATVLVLAALTLTRMKFL). The Cytoplasmic portion of the chain corresponds to 177–183 (HPFRVRQ). The helical transmembrane segment at 184-204 (FMPLNIAVTFVWLISSGLLIV) threads the bilayer. Residues 205–209 (QQPAD) are Periplasmic-facing. Residues 210-230 (LPILLGLWFAASAYFVGICLW) traverse the membrane as a helical segment. The Cytoplasmic segment spans residues 231–238 (RSAREWFG).

Belongs to the CDP-alcohol phosphatidyltransferase class-I family. Mn(2+) serves as cofactor.

Its subcellular location is the cell inner membrane. The enzyme catalyses a CDP-1,2-diacyl-sn-glycerol + choline = a 1,2-diacyl-sn-glycero-3-phosphocholine + CMP + H(+). In terms of biological role, condenses choline with CDP-diglyceride to produce phosphatidylcholine and CMP. The polypeptide is Phosphatidylcholine synthase (Pseudomonas aeruginosa (strain ATCC 15692 / DSM 22644 / CIP 104116 / JCM 14847 / LMG 12228 / 1C / PRS 101 / PAO1)).